The following is a 234-amino-acid chain: Transcriptional activator protein TraR (234 aa).

An HTH luxR-type domain is found at 167-232; it reads TAEDAAWLDP…HLTALAIRRK (66 aa). The H-T-H motif DNA-binding region spans 191–210; that stretch reads MEEIADVEGVKYNSVRVKLR.

It belongs to the autoinducer-regulated transcriptional regulatory protein family.

In terms of biological role, positive regulation of conjugal transfer of Ti plasmids. TraR activates target genes in the presence of AAI and also activates traR and traI themselves. In Rhizobium radiobacter (Agrobacterium tumefaciens), this protein is Transcriptional activator protein TraR (traR).